A 67-amino-acid polypeptide reads, in one-letter code: Prokaryotic ubiquitin-like protein Pup (67 aa).

Low complexity predominate over residues 1 to 11 (MAGQEQQQPQS). Positions 1–47 (MAGQEQQQPQSRESEFEDDAPATPPAPGEAQASAATQGVDDLLDEID) are disordered. Positions 25–61 (PAPGEAQASAATQGVDDLLDEIDGVLESNAEEFVRAF) are ARC ATPase binding. Residue Q67 is modified to Deamidated glutamine. Q67 participates in a covalent cross-link: Isoglutamyl lysine isopeptide (Gln-Lys) (interchain with K-? in acceptor proteins).

It belongs to the prokaryotic ubiquitin-like protein family. In terms of assembly, strongly interacts with the proteasome-associated ATPase ARC through a hydrophobic interface; the interacting region of Pup lies in its C-terminal half. There is one Pup binding site per ARC hexamer ring. Post-translationally, is modified by deamidation of its C-terminal glutamine to glutamate by the deamidase Dop, a prerequisite to the subsequent pupylation process.

It participates in protein degradation; proteasomal Pup-dependent pathway. Its function is as follows. Protein modifier that is covalently attached to lysine residues of substrate proteins, thereby targeting them for proteasomal degradation. The tagging system is termed pupylation. This Arthrobacter sp. (strain FB24) protein is Prokaryotic ubiquitin-like protein Pup.